Consider the following 1405-residue polypeptide: MNQEVMNLFNQQAQPQSFDQIKISISSPEKILSWSYGEIKKPETINYRTFKPERDGLFCARIFGPIKDYECLCGKYKRMKYKGVICEKCGVEVTLARVRRDRMGHIELAAPVAHIWFLKSLPSRIGLLLDMALKDLERILYFESYVVIEPGLTPLKERQLLSEEEYLRAQEEYGEDSFTAMIGAEAIRRILQELDLEGIATALKEEIATTTSELKPKKLMKRLKIIEAFQLSGNKPEWMILTVVPVIPPDLRPLVPLDGGRFATSDLNDLYRRVINRNNRLKRLIELRAPDIIIRNEKRMLQEAVDALFDNGRRGRVITGANKRPLKSLADMLKGKQGRFRQNLLGKRVDYSGRSVIVVGPELKLHQCGLPKKMALELFKPFIYARLDAKGFSATVKQAKKLVEKEKPEVWDILDEVIREHPVMLNRAPTLHRLGIQAFEPKLIEGKAIQLHPLVCAAFNADFDGDQMAVHVPLSLEAQLEARVLMMSTNNILHPANGQPIIVPSQDIVLGLYYLSIVADGAVGEHKADDKNNPMQGVFGDIGQLEHALAAKTVSLHSKIKWRWRGLGPDGEPVSKIYDTTPGRVILSGVLPLHPKVPFDVVNKLMTKKEISAMIDTVYRHCGQKESVIFCDRIMALGFSHAFRAGISFGKDDMVVPENKWSIVDDTRALVKDYEQQYNDGLITQGEKYNKVVDAWAKCSDKLAAEMMGRISAVQKDDKGADKQVNSIYMMSHSGARGSPAQMKQLAAMRGLMAKPSGEIIETPIISNFKEGLDVLEYFNSTHGARKGLADTALKTANSGYLTRRLVDVAQDAVIRETDCGTTNGIKMRAIIDAGQVVAPLAIRILGRATAEDLVAQDGTVIVKTGETIEERHLPAINAAGIQEVKIRSVLVCQTKSGVCATCYGRDLARGTPVNMGEAVGVIAAQSIGEPGTQLTMRTFHIGGAAQIADSSFIESSFEGTIKIRNRSLAKNSDGDLIATGRSVAVVIVGPDGTERAVHRLQYGAKVRVDEGDTIKRGQRIAEWDPYTRPIVAEVDGIVGYEDLYDGQSITETTDESTGIAKRVVIDWRGSARTSDLKPAMLVLDQDGKPVKLARGSDARYFLPVDAIIGLDPGAKVKAGDVLARVSTESAKTRDITGGLPRVAELFEARRPKDAAIIAEKSGTIQFGRDYKNKRRLTLTPHDGSEAVEYLIPKGKHIHLQDGDVVELGDYIVDGNPAPHDILAIKGVEELAAYLVNEIQEVYRLQGVSINDKHIEVIVRQMLQKVEITDGGDSDILTGDQIDRTELAEYNEKLLAEGKKPIQGVPVLLGITKASLQTKSFISAASFQETTRVLTEAAVNGKVDTLEGLKENVIVGSLIPAGTGSLAADIRSIARRRDSLILQQRSAENAANAAELSELPPAAAE.

Residues cysteine 71, cysteine 73, cysteine 86, and cysteine 89 each contribute to the Zn(2+) site. Mg(2+) contacts are provided by aspartate 462, aspartate 464, and aspartate 466. Cysteine 820, cysteine 893, cysteine 900, and cysteine 903 together coordinate Zn(2+).

Belongs to the RNA polymerase beta' chain family. The RNAP catalytic core consists of 2 alpha, 1 beta, 1 beta' and 1 omega subunit. When a sigma factor is associated with the core the holoenzyme is formed, which can initiate transcription. The cofactor is Mg(2+). It depends on Zn(2+) as a cofactor.

It carries out the reaction RNA(n) + a ribonucleoside 5'-triphosphate = RNA(n+1) + diphosphate. Functionally, DNA-dependent RNA polymerase catalyzes the transcription of DNA into RNA using the four ribonucleoside triphosphates as substrates. The chain is DNA-directed RNA polymerase subunit beta' from Methylorubrum populi (strain ATCC BAA-705 / NCIMB 13946 / BJ001) (Methylobacterium populi).